Here is a 354-residue protein sequence, read N- to C-terminus: UDP-3-O-acylglucosamine N-acyltransferase (354 aa).

Catalysis depends on His-247, which acts as the Proton acceptor.

It belongs to the transferase hexapeptide repeat family. LpxD subfamily. As to quaternary structure, homotrimer.

The enzyme catalyses a UDP-3-O-[(3R)-3-hydroxyacyl]-alpha-D-glucosamine + a (3R)-hydroxyacyl-[ACP] = a UDP-2-N,3-O-bis[(3R)-3-hydroxyacyl]-alpha-D-glucosamine + holo-[ACP] + H(+). Its pathway is bacterial outer membrane biogenesis; LPS lipid A biosynthesis. Functionally, catalyzes the N-acylation of UDP-3-O-acylglucosamine using 3-hydroxyacyl-ACP as the acyl donor. Is involved in the biosynthesis of lipid A, a phosphorylated glycolipid that anchors the lipopolysaccharide to the outer membrane of the cell. The chain is UDP-3-O-acylglucosamine N-acyltransferase from Chlamydia trachomatis serovar L2b (strain UCH-1/proctitis).